Reading from the N-terminus, the 192-residue chain is Rhomboid protease GlpG (192 aa).

Topologically, residues 1 to 10 (MKNFLAQQGK) are cytoplasmic. A helical membrane pass occupies residues 11–31 (ITLILTALCVLIYLAQQLGFE). Residues 32-57 (DDIMYLMHYPAYEEQDSEVWRYISHT) are Periplasmic-facing. A helical membrane pass occupies residues 58-78 (LVHLSNLHILFNLSWFFIFGG). At 79–82 (MIER) the chain is on the cytoplasmic side. Residues 83-103 (TFGSVKLLMLYVVASAITGYV) form a helical membrane-spanning segment. The Periplasmic portion of the chain corresponds to 104 to 107 (QNYV). The chain crosses the membrane as a helical span at residues 108–128 (SGPAFFGLSGVVYAVLGYVFI). Residue serine 116 is the Nucleophile of the active site. At 129-141 (RDKLNHHLFDLPE) the chain is on the cytoplasmic side. Residues 142 to 162 (GFFTMLLVGIALGFISPLFGV) traverse the membrane as a helical segment. Residue glutamate 163 is a topological domain, periplasmic. The chain crosses the membrane as a helical span at residues 164 to 184 (MGNAAHISGLIVGLIWGFIDS). The active site involves histidine 169. Residues 185–192 (KLRKNSLE) are Cytoplasmic-facing.

Belongs to the peptidase S54 family.

The protein resides in the cell inner membrane. It carries out the reaction Cleaves type-1 transmembrane domains using a catalytic dyad composed of serine and histidine that are contributed by different transmembrane domains.. Rhomboid-type serine protease that catalyzes intramembrane proteolysis. This is Rhomboid protease GlpG (glpG) from Haemophilus influenzae (strain ATCC 51907 / DSM 11121 / KW20 / Rd).